Here is a 299-residue protein sequence, read N- to C-terminus: Sulfate adenylyltransferase subunit 2 (299 aa).

This sequence belongs to the PAPS reductase family. CysD subfamily. Sulfate-activating enzymes, NodP and NodQ, may be physically associated.

The enzyme catalyses sulfate + ATP + H(+) = adenosine 5'-phosphosulfate + diphosphate. In terms of biological role, proposed to provide activated sulfate for transfer to nod factor. This Rhizobium sp. (strain BR816) protein is Sulfate adenylyltransferase subunit 2 (nodP).